A 174-amino-acid chain; its full sequence is Auxin-responsive protein IAA2 (174 aa).

An EAR-like (transcriptional repression) motif is present at residues 16–20; it reads LCLGL. A disordered region spans residues 44 to 67; sequence FEETRDEEESTPPTKTQIVGWPPV. Positions 77–164 constitute a PB1 domain; that stretch reads VSYVKVSMDG…SCKRLRIMKG (88 aa).

The protein belongs to the Aux/IAA family. As to quaternary structure, homodimers and heterodimers. Interacts with the auxin-responsive protein IAA1. Interacts with TPL. In terms of tissue distribution, preferentially expressed in vegetative organs.

The protein localises to the nucleus. In terms of biological role, aux/IAA proteins are short-lived transcriptional factors that function as repressors of early auxin response genes at low auxin concentrations. Repression is thought to result from the interaction with auxin response factors (ARFs), proteins that bind to the auxin-responsive promoter element (AuxRE). Formation of heterodimers with ARF proteins may alter their ability to modulate early auxin response genes expression. This chain is Auxin-responsive protein IAA2 (IAA2), found in Arabidopsis thaliana (Mouse-ear cress).